Reading from the N-terminus, the 206-residue chain is Small ribosomal subunit protein uS4 (206 aa).

The 64-residue stretch at 96 to 159 (TRLDNVVYRM…KKQARISASL (64 aa)) folds into the S4 RNA-binding domain.

The protein belongs to the universal ribosomal protein uS4 family. In terms of assembly, part of the 30S ribosomal subunit. Contacts protein S5. The interaction surface between S4 and S5 is involved in control of translational fidelity.

In terms of biological role, one of the primary rRNA binding proteins, it binds directly to 16S rRNA where it nucleates assembly of the body of the 30S subunit. Its function is as follows. With S5 and S12 plays an important role in translational accuracy. This is Small ribosomal subunit protein uS4 from Shewanella violacea.